Consider the following 297-residue polypeptide: Mitochondrial nicotinamide adenine dinucleotide transporter SLC25A52 (297 aa).

3 Solcar repeats span residues Val-28 to Leu-108, Pro-116 to His-200, and Ala-209 to Phe-296. 6 helical membrane-spanning segments follow: residues Tyr-34–Ile-51, Leu-85–Leu-105, Phe-118–Leu-138, Ile-179–Glu-199, Phe-215–Val-235, and Leu-268–Thr-289.

This sequence belongs to the mitochondrial carrier (TC 2.A.29) family.

Its subcellular location is the mitochondrion inner membrane. The catalysed reaction is NAD(+)(in) = NAD(+)(out). In terms of biological role, mitochondrial membrane carrier protein that mediates the import of NAD(+) into mitochondria. Compared to SLC25A51, SLC25A52-mediated transport is not essential for the import of NAD(+) in mitochondria. The transport mechanism, uniport or antiport, its electrogenicity and substrate selectivity, remain to be elucidated. In Homo sapiens (Human), this protein is Mitochondrial nicotinamide adenine dinucleotide transporter SLC25A52.